The chain runs to 410 residues: Neuroserpin (410 aa).

Residues 1–16 form the signal peptide; sequence MAFLGLFSLLVLQSMA. Residues Asn-157, Asn-321, and Asn-401 are each glycosylated (N-linked (GlcNAc...) asparagine). Ser-403 carries an O-linked (Xyl...) (chondroitin sulfate) serine glycan.

This sequence belongs to the serpin family. Monomer. Has a tendency to form large polymers already at 41 and 45 degrees Celsius (in vitro). As to expression, detected in brain cortex and hippocampus pyramidal neurons (at protein level). Detected in cerebrospinal fluid (at protein level). Predominantly expressed in the brain.

The protein resides in the secreted. It localises to the cytoplasmic vesicle. The protein localises to the secretory vesicle lumen. It is found in the perikaryon. In terms of biological role, serine protease inhibitor that inhibits plasminogen activators and plasmin but not thrombin. May be involved in the formation or reorganization of synaptic connections as well as for synaptic plasticity in the adult nervous system. May protect neurons from cell damage by tissue-type plasminogen activator. This chain is Neuroserpin (SERPINI1), found in Homo sapiens (Human).